We begin with the raw amino-acid sequence, 2157 residues long: DExH-box ATP-dependent RNA helicase DExH14 (2157 aa).

The tract at residues 374–394 (KAASNTQSRMPTYGTQVTVQT) is disordered. Residues 375–394 (AASNTQSRMPTYGTQVTVQT) show a composition bias toward polar residues. One can recognise a Helicase ATP-binding 1 domain in the interval 517–699 (QTVYHTNENI…FLRVNTDTGL (183 aa)). 530-537 (APTGAGKT) provides a ligand contact to ATP. The short motif at 641 to 644 (DEVH) is the DEVH box element. In terms of domain architecture, Helicase C-terminal 1 spans 734-932 (CYKKVVDSIK…SLKDNLNAEV (199 aa)). Residues 1008–1315 (CTELGRVASH…LHAETYFTIS (308 aa)) form the SEC63 1 domain. The Helicase ATP-binding 2 domain maps to 1365–1540 (HVLYHTDNNV…WLGVGEIGLF (176 aa)). ATP is bound at residue 1378–1385 (APTGSGKT). The DEIH box motif lies at 1482–1485 (DEIH). A Helicase C-terminal 2 domain is found at 1571 to 1780 (NKPAYAAICT…GTIGNKEDAV (210 aa)). In terms of domain architecture, SEC63 2 spans 1839-2150 (PTMLGTIASQ…YLGFEQEHSI (312 aa)).

Belongs to the DExH box helicase family.

The protein resides in the nucleus. It carries out the reaction ATP + H2O = ADP + phosphate + H(+). Functionally, RNA helicase that plays an essential role in pre-mRNA splicing as component of the U5 snRNP and U4/U6-U5 tri-snRNP complexes. Involved in spliceosome assembly, activation and disassembly. This chain is DExH-box ATP-dependent RNA helicase DExH14, found in Arabidopsis thaliana (Mouse-ear cress).